Consider the following 94-residue polypeptide: Integration host factor subunit beta (94 aa).

The protein belongs to the bacterial histone-like protein family. As to quaternary structure, heterodimer of an alpha and a beta chain.

Its function is as follows. This protein is one of the two subunits of integration host factor, a specific DNA-binding protein that functions in genetic recombination as well as in transcriptional and translational control. This Haemophilus influenzae (strain PittGG) protein is Integration host factor subunit beta.